The chain runs to 141 residues: Transcription antitermination protein NusB (141 aa).

This sequence belongs to the NusB family.

Its function is as follows. Involved in transcription antitermination. Required for transcription of ribosomal RNA (rRNA) genes. Binds specifically to the boxA antiterminator sequence of the ribosomal RNA (rrn) operons. This chain is Transcription antitermination protein NusB, found in Treponema pallidum (strain Nichols).